The sequence spans 78 residues: U7-lycotoxin-Ls1f (78 aa).

The signal sequence occupies residues 1-22; it reads MKLIIFTGLALLLIVSLIDVEA. Residues 23–26 constitute a propeptide that is removed on maturation; sequence QNEG.

This sequence belongs to the neurotoxin 19 (CSTX) family. 07 (U7-Lctx) subfamily. Post-translationally, contains 4 disulfide bonds. In terms of tissue distribution, expressed by the venom gland.

The protein localises to the secreted. The polypeptide is U7-lycotoxin-Ls1f (Lycosa singoriensis (Wolf spider)).